The following is a 439-amino-acid chain: uncharacterized protein (439 aa).

One can recognise a TRAM domain in the interval 1 to 55; it reads MLEQVRIQKMVNGGYGLAHLSNGKVVLVEGAYPGEEVLIKTYREKRDFSFGKVVS. Residues C68, C74, C77, and C149 each contribute to the [4Fe-4S] cluster site. S-adenosyl-L-methionine-binding residues include Q272, Y301, E322, and D367. Catalysis depends on C394, which acts as the Nucleophile.

This sequence belongs to the class I-like SAM-binding methyltransferase superfamily. RNA M5U methyltransferase family.

This is an uncharacterized protein from Thermotoga maritima (strain ATCC 43589 / DSM 3109 / JCM 10099 / NBRC 100826 / MSB8).